A 209-amino-acid polypeptide reads, in one-letter code: Ribosomal RNA large subunit methyltransferase E (209 aa).

Gly-63, Trp-65, Asp-83, Asp-99, and Asp-124 together coordinate S-adenosyl-L-methionine. The Proton acceptor role is filled by Lys-164.

This sequence belongs to the class I-like SAM-binding methyltransferase superfamily. RNA methyltransferase RlmE family.

The protein resides in the cytoplasm. The enzyme catalyses uridine(2552) in 23S rRNA + S-adenosyl-L-methionine = 2'-O-methyluridine(2552) in 23S rRNA + S-adenosyl-L-homocysteine + H(+). In terms of biological role, specifically methylates the uridine in position 2552 of 23S rRNA at the 2'-O position of the ribose in the fully assembled 50S ribosomal subunit. In Shewanella putrefaciens (strain CN-32 / ATCC BAA-453), this protein is Ribosomal RNA large subunit methyltransferase E.